Here is a 498-residue protein sequence, read N- to C-terminus: Phosphatidylserine synthase (498 aa).

The disordered stretch occupies residues 1–65 (MKKRTNSRGT…GSVSSAGARR (65 aa)). Residues 1-92 (MKKRTNSRGT…VDDISLDFFY (92 aa)) are Cytoplasmic-facing. Over residues 7–25 (SRGTPTSSGDALLDTSFSS) the composition is skewed to polar residues. Residues 93 to 113 (KPHTITLLAVSVLAVMYFAFV) form a helical membrane-spanning segment. Over 114 to 122 (RNEANVDEN) the chain is Lumenal. The chain crosses the membrane as a helical span at residues 123 to 143 (LWAGLLCIVFFFLIVSVIAFP). Residues 144 to 153 (NGPFTRPHPA) lie on the Cytoplasmic side of the membrane. Residues 154–174 (VWRILFGCSVLYLLTLQFLMF) traverse the membrane as a helical segment. The Lumenal portion of the chain corresponds to 175 to 239 (QNYPTIRSIF…AFKAILIRHM (65 aa)). N-linked (GlcNAc...) asparagine glycosylation occurs at Asn205. Residues 240–260 (GILWAISVMWEITEITFAHLL) traverse the membrane as a helical segment. The Cytoplasmic portion of the chain corresponds to 261–266 (PNFIEC). A helical membrane pass occupies residues 267 to 287 (WWDALILDVIICNGLGIWMGL). Residues 288–339 (KICQILEMREYKWASIKDISTTTGKIKRAMLQFTPESWSAIRWLDPKSTAMR) lie on the Lumenal side of the membrane. A helical transmembrane segment spans residues 340-360 (FAAVIQLVIFWQVTELNTFFL). Residues 361–367 (KHIFEMP) lie on the Cytoplasmic side of the membrane. Residues 368–388 (PDHFIVIGRLIFIGLFVAPSV) traverse the membrane as a helical segment. The Lumenal portion of the chain corresponds to 389-402 (RQYYVYVTDTRCKR). Residues 403-423 (VGTQCWVYGAIMVSEAILCIK) form a helical membrane-spanning segment. Residues 424-436 (NGKELFERTQAIN) lie on the Cytoplasmic side of the membrane. Residues 437–457 (IVLWLTVQVIISVAFVYLAVY) form a helical membrane-spanning segment. The Lumenal segment spans residues 458–498 (WQQRQLKKVSSTPAKTKETIPASSSSPSKGKLSPQKEKKLK). Positions 465–498 (KVSSTPAKTKETIPASSSSPSKGKLSPQKEKKLK) are disordered. The segment covering 478–490 (PASSSSPSKGKLS) has biased composition (low complexity).

The protein belongs to the phosphatidyl serine synthase family.

Its subcellular location is the endoplasmic reticulum membrane. It carries out the reaction a 1,2-diacyl-sn-glycero-3-phosphoethanolamine + L-serine = a 1,2-diacyl-sn-glycero-3-phospho-L-serine + ethanolamine. The protein operates within phospholipid metabolism; phosphatidylserine biosynthesis. Its function is as follows. Catalyzes a base-exchange reaction in which the polar head group of phosphatidylethanolamine (PE) is replaced by L-serine. In Drosophila melanogaster (Fruit fly), this protein is Phosphatidylserine synthase.